The following is a 905-amino-acid chain: Translation initiation factor IF-2 (905 aa).

Disordered regions lie at residues 52-84, 116-230, and 269-318; these read QSHGQKEKRRISLKSKTTSTARVTGSSGKSKSV, AKKR…QKKT, and FEKE…FEKP. The span at 65-84 shows a compositional bias: polar residues; sequence KSKTTSTARVTGSSGKSKSV. A compositionally biased stretch (basic and acidic residues) spans 116-138; that stretch reads AKKRAEEEAKKREQVKKEAEERQ. Positions 165-178 are enriched in low complexity; the sequence is VVVKKGSKAAAAAK. Composition is skewed to basic and acidic residues over residues 190–230 and 269–278; these read PKVE…QKKT and FEKERREIKR. A tr-type G domain is found at 406–575; it reads TRPPVVTIMG…NLQAELMELE (170 aa). A G1 region spans residues 415–422; that stretch reads GHVDHGKT. Position 415 to 422 (415 to 422) interacts with GTP; the sequence is GHVDHGKT. The G2 stretch occupies residues 440–444; the sequence is GITQH. A G3 region spans residues 461 to 464; it reads DTPG. Residues 461-465 and 515-518 each bind GTP; these read DTPGH and NKMD. Residues 515-518 form a G4 region; that stretch reads NKMD. The tract at residues 551-553 is G5; that stretch reads SAK.

Belongs to the TRAFAC class translation factor GTPase superfamily. Classic translation factor GTPase family. IF-2 subfamily.

The protein resides in the cytoplasm. Functionally, one of the essential components for the initiation of protein synthesis. Protects formylmethionyl-tRNA from spontaneous hydrolysis and promotes its binding to the 30S ribosomal subunits. Also involved in the hydrolysis of GTP during the formation of the 70S ribosomal complex. The chain is Translation initiation factor IF-2 from Psychrobacter sp. (strain PRwf-1).